A 444-amino-acid chain; its full sequence is Structure-specific endonuclease subunit SLX1 (444 aa).

The GIY-YIG domain maps to 23 to 105 (AFYCCYLLRS…QNTKVSRHAD (83 aa)). The segment at 240–295 (CGVCKQRLILQHDIIAVCSHSSCHCAAHLSCLSSHFLKDKDSDSELIPREGTCPAC) adopts an SLX1-type zinc-finger fold. Disordered regions lie at residues 323 to 355 (RRRR…DALQ) and 386 to 444 (AHRP…EVIE).

Belongs to the SLX1 family. Forms a heterodimer with SLX4. The cofactor is a divalent metal cation.

It is found in the nucleus. Its function is as follows. Catalytic subunit of the SLX1-SLX4 structure-specific endonuclease that resolves DNA secondary structures generated during DNA repair and recombination. Has endonuclease activity towards branched DNA substrates, introducing single-strand cuts in duplex DNA close to junctions with ss-DNA. This Paracoccidioides brasiliensis (strain Pb18) protein is Structure-specific endonuclease subunit SLX1.